Reading from the N-terminus, the 358-residue chain is Short chain dehydrogenase sor7 (358 aa).

The interval 1-22 is disordered; the sequence is MSSPAIGQPPIPPTPTDANISG. The NADP(+) site is built by Leu-34, Asp-88, Asn-115, Tyr-206, Lys-210, Val-238, and Thr-240. Tyr-206 functions as the Proton donor in the catalytic mechanism. Residue Lys-210 is the Lowers pKa of active site Tyr of the active site.

The protein belongs to the short-chain dehydrogenases/reductases (SDR) family.

The protein operates within secondary metabolite biosynthesis. Short chain dehydrogenase; part of the SOR gene cluster that mediates the biosynthesis of sorbicillinoids, a diverse group of yellow secondary metabolites that restrict growth of competing pathogenic fungi but not of bacteria. Sorbicillinoids biosynthesis requires the action of two PKSs. The SOR cluster is required for the production of trichodimerol and dihydrotrichotetronin, with sor2 being sufficient for production of trichodimerol, but not dihydrotrichotetronin in the light. Sor1 iteratively combines three acetyl units and the growing chain is modified by the ketoacyl reductase subunit, and optional by the enoyl reductase subunit in the second cycle. The polyketide is then handed over to the PKS sor2, which adds three more acetyl units, and two methyl groups. Sor2 releases an aldehyde, which undergoes spontaneous cyclization resulting in the formation of sorbicillin or 2',3'-dihydrosorbicillin. The monooxygenase sor5 oxidizes sorbicillin and 2',3'-dihydrosorbicillin to 2',3'-dihydrosorbicillinol and sorbicillinol, respectively. The oxidoreductase sor8 further converts sorbicillinol into oxosorbicillinol. Sorbicillinol is the building block for the other sorbicillinoids such as disorbicillinol, bisvertinolon, dihydrobisvertinolone, and dihydrotrichotetronine. In Hypocrea jecorina (strain QM6a) (Trichoderma reesei), this protein is Short chain dehydrogenase sor7.